Reading from the N-terminus, the 321-residue chain is Glucokinase (321 aa).

Glycine 8–threonine 13 lines the ATP pocket.

It belongs to the bacterial glucokinase family.

The protein localises to the cytoplasm. The enzyme catalyses D-glucose + ATP = D-glucose 6-phosphate + ADP + H(+). This chain is Glucokinase, found in Escherichia fergusonii (strain ATCC 35469 / DSM 13698 / CCUG 18766 / IAM 14443 / JCM 21226 / LMG 7866 / NBRC 102419 / NCTC 12128 / CDC 0568-73).